A 706-amino-acid chain; its full sequence is Termination factor NPH-I homolog (706 aa).

Residues 62–227 (IGQGENTRGL…VPCFNMLSGR (166 aa)) form the Helicase ATP-binding domain. 75-82 (HQMGMGKT) is a binding site for ATP. Residues 168-171 (DEAH) carry the DEAH box motif. One can recognise a Helicase C-terminal domain in the interval 417-599 (QCLQPLKVLE…HLNSAFRDLL (183 aa)).

Belongs to the DEAD box helicase family. DEAH subfamily. Part of the viral DNA-directed RNA polymerase that consists of 8 polII-like subunits (RPB1, RPB2, RPB3, RPB5, RPB6, RPB7, RPB9, RPB10), a capping enzyme and a termination factor.

The protein localises to the virion. Its function is as follows. Putative DNA-dependent ATPase required for providing the needed energy to achieve the termination of early transcripts. The sequence is that of Termination factor NPH-I homolog from African swine fever virus (isolate Tick/South Africa/Pretoriuskop Pr4/1996) (ASFV).